Consider the following 110-residue polypeptide: U32-theraphotoxin-Cg1a (110 aa).

The first 19 residues, 1–19 (MNHCFLILFTLIVFTVVWS), serve as a signal peptide directing secretion. Positions 20–43 (LEENEEYPDEDEMIESFMDGYSYR) are excised as a propeptide. Cystine bridges form between cysteine 49–cysteine 63, cysteine 56–cysteine 69, cysteine 60–cysteine 105, and cysteine 62–cysteine 80.

Belongs to the neurotoxin 03 (Tx2) family. 02 subfamily. In terms of tissue distribution, expressed by the venom gland.

Its subcellular location is the secreted. Probable ion channel inhibitor. The chain is U32-theraphotoxin-Cg1a from Chilobrachys guangxiensis (Chinese earth tiger tarantula).